Reading from the N-terminus, the 384-residue chain is Queuine tRNA-ribosyltransferase (384 aa).

Residue aspartate 103 is the Proton acceptor of the active site. Residues 103 to 107, aspartate 157, glutamine 200, and glycine 227 each bind substrate; that span reads DSGGF. The RNA binding stretch occupies residues 258–264; it reads GVGTYRE. Aspartate 277 (nucleophile) is an active-site residue. Residues 282 to 286 are RNA binding; important for wobble base 34 recognition; it reads TRLAR. Residues cysteine 315, cysteine 317, cysteine 320, and histidine 346 each coordinate Zn(2+).

Belongs to the queuine tRNA-ribosyltransferase family. As to quaternary structure, homodimer. Within each dimer, one monomer is responsible for RNA recognition and catalysis, while the other monomer binds to the replacement base PreQ1. The cofactor is Zn(2+).

It carries out the reaction 7-aminomethyl-7-carbaguanine + guanosine(34) in tRNA = 7-aminomethyl-7-carbaguanosine(34) in tRNA + guanine. It functions in the pathway tRNA modification; tRNA-queuosine biosynthesis. Catalyzes the base-exchange of a guanine (G) residue with the queuine precursor 7-aminomethyl-7-deazaguanine (PreQ1) at position 34 (anticodon wobble position) in tRNAs with GU(N) anticodons (tRNA-Asp, -Asn, -His and -Tyr). Catalysis occurs through a double-displacement mechanism. The nucleophile active site attacks the C1' of nucleotide 34 to detach the guanine base from the RNA, forming a covalent enzyme-RNA intermediate. The proton acceptor active site deprotonates the incoming PreQ1, allowing a nucleophilic attack on the C1' of the ribose to form the product. After dissociation, two additional enzymatic reactions on the tRNA convert PreQ1 to queuine (Q), resulting in the hypermodified nucleoside queuosine (7-(((4,5-cis-dihydroxy-2-cyclopenten-1-yl)amino)methyl)-7-deazaguanosine). This is Queuine tRNA-ribosyltransferase from Synechococcus elongatus (strain ATCC 33912 / PCC 7942 / FACHB-805) (Anacystis nidulans R2).